We begin with the raw amino-acid sequence, 543 residues long: Putative cysteine ligase BshC (543 aa).

Residues 419–440 (DEKNNDNIDEVVEEVKAQISDI) adopt a coiled-coil conformation.

Belongs to the BshC family.

Functionally, involved in bacillithiol (BSH) biosynthesis. May catalyze the last step of the pathway, the addition of cysteine to glucosamine malate (GlcN-Mal) to generate BSH. The polypeptide is Putative cysteine ligase BshC (Oceanobacillus iheyensis (strain DSM 14371 / CIP 107618 / JCM 11309 / KCTC 3954 / HTE831)).